The chain runs to 1236 residues: Chitinase-like protein PB1E7.04c (1236 aa).

Residues 1-19 (MRLISSLLLLVYSARLALS) form the signal peptide. Asn21, Asn24, Asn54, Asn123, Asn225, Asn237, Asn255, Asn267, Asn277, Asn288, and Asn309 each carry an N-linked (GlcNAc...) asparagine glycan. Positions 26–325 (TAVLGYWGSN…EAIHKILDTK (300 aa)) constitute a GH18 domain. Disordered regions lie at residues 326–367 (SKHS…TSSA), 449–497 (VSSI…QSTL), and 584–625 (TSSP…STIL). The segment covering 339 to 351 (QGLESTSSIALNP) has biased composition (polar residues). The span at 352-367 (TSSISSTSSSSSTSSA) shows a compositional bias: low complexity. 5 N-linked (GlcNAc...) asparagine glycosylation sites follow: Asn715, Asn737, Asn768, Asn786, and Asn813. Disordered stretches follow at residues 804 to 836 (ISTS…LAAN), 868 to 927 (TTAL…TSSS), 946 to 979 (TPTS…SSIA), and 1125 to 1159 (AASG…TPSN). Residues 810–821 (NEYNTSFHAPTV) are compositionally biased toward polar residues. Positions 822–832 (SSTTSSSSTTS) are enriched in low complexity. Low complexity predominate over residues 1125–1156 (AASGSSTVTSSATASSSSSAATTADSSVTTDT).

It belongs to the glycosyl hydrolase 18 family. Chitinase class III subfamily.

The protein localises to the secreted. This Schizosaccharomyces pombe (strain 972 / ATCC 24843) (Fission yeast) protein is Chitinase-like protein PB1E7.04c.